We begin with the raw amino-acid sequence, 231 residues long: CD302 antigen (231 aa).

Positions 1–21 (MSAAVVATLPTLLLLLGLAAA) are cleaved as a signal peptide. The Extracellular segment spans residues 22–169 (DCPSSSWVQF…YEKKYLPDHH (148 aa)). Positions 31-153 (FQSNCYIFLQ…CEVSSVEGAL (123 aa)) constitute a C-type lectin domain. N-linked (GlcNAc...) asparagine glycosylation occurs at N110. C129 and C144 are oxidised to a cystine. Residues 170–190 (ILITALVIASTTILTITGAVV) form a helical membrane-spanning segment. Over 191–231 (WFLYKRNLTSGLTNTAYTTAPQLPYNDDCILVDAEENEYVA) the chain is Cytoplasmic.

It localises to the membrane. Its subcellular location is the cell projection. The protein localises to the filopodium. It is found in the cytoplasm. The protein resides in the cell cortex. It localises to the microvillus. Potential multifunctional C-type lectin receptor that may play roles in endocytosis and phagocytosis as well as in cell adhesion and migration. This is CD302 antigen from Trichosurus vulpecula (Brush-tailed possum).